Here is a 468-residue protein sequence, read N- to C-terminus: 5-carboxymethyl-2-hydroxymuconate semialdehyde dehydrogenase (468 aa).

Glu-244 is a catalytic residue. Cys-278 acts as the Nucleophile in catalysis.

The protein belongs to the aldehyde dehydrogenase family. In terms of assembly, homodimer.

The catalysed reaction is 2-hydroxy-5-carboxymethylmuconate semialdehyde + NAD(+) + H2O = (2E,4Z)-5-hydroxypenta-2,4-diene-1,2,5-tricarboxylate + NADH + 2 H(+). It participates in aromatic compound metabolism; 4-hydroxyphenylacetate degradation; pyruvate and succinate semialdehyde from 4-hydroxyphenylacetate: step 3/7. Functionally, catalyzes the conversion of 5-carboxymethyl-2-hydroxy-muconic semialdehyde (CHMS) into 5-carboxymethyl-2-hydroxy-muconic acid (CHM or (2E,4Z)-5-hydroxypenta-2,4-diene-1,2,5-tricarboxylate). Is involved in a meta-cleavage pathway for the catabolism of 4-hydroxyphenylacetate (4-HPA) via homoprotocatechuate (HPC or 3,4-dihydroxyphenylacetate). The chain is 5-carboxymethyl-2-hydroxymuconate semialdehyde dehydrogenase from Escherichia coli.